A 95-amino-acid polypeptide reads, in one-letter code: Glutamyl-tRNA(Gln) amidotransferase subunit C (95 aa).

Belongs to the GatC family. As to quaternary structure, heterotrimer of A, B and C subunits.

The enzyme catalyses L-glutamyl-tRNA(Gln) + L-glutamine + ATP + H2O = L-glutaminyl-tRNA(Gln) + L-glutamate + ADP + phosphate + H(+). It catalyses the reaction L-aspartyl-tRNA(Asn) + L-glutamine + ATP + H2O = L-asparaginyl-tRNA(Asn) + L-glutamate + ADP + phosphate + 2 H(+). Its function is as follows. Allows the formation of correctly charged Asn-tRNA(Asn) or Gln-tRNA(Gln) through the transamidation of misacylated Asp-tRNA(Asn) or Glu-tRNA(Gln) in organisms which lack either or both of asparaginyl-tRNA or glutaminyl-tRNA synthetases. The reaction takes place in the presence of glutamine and ATP through an activated phospho-Asp-tRNA(Asn) or phospho-Glu-tRNA(Gln). This Rhizobium meliloti (strain 1021) (Ensifer meliloti) protein is Glutamyl-tRNA(Gln) amidotransferase subunit C.